The primary structure comprises 261 residues: MNGLQEVCSSSGSVMIGLPAEEDENAAHSSEDSSCPDESVSETELDLALGLSIGRRKVRSSLSSSSSSLTRESGTKRSADSSPAAASNATRQVAVGWPPLRTYRINSLVNQAKSLATEGGLSSGIQKETTKSVVVAAKNDDACFIKSSRTSMLVKVTMDGVIIGRKVDLNALDSYAALEKTLDLMFFQIPSPVTRSNTQGYKTIKETCTSKLLDGSSEYIITYQDKDGDWMLVGDVPWQMFLGSVTRLRIMKTSIGAGVGK.

A disordered region spans residues 1-43 (MNGLQEVCSSSGSVMIGLPAEEDENAAHSSEDSSCPDESVSET). The short motif at 45–49 (LDLAL) is the EAR-like (transcriptional repression) element. A disordered region spans residues 62 to 90 (LSSSSSSLTRESGTKRSADSSPAAASNAT). The segment covering 80–89 (DSSPAAASNA) has biased composition (low complexity). A PB1 domain is found at 151–253 (SMLVKVTMDG…SVTRLRIMKT (103 aa)).

The protein belongs to the Aux/IAA family. As to quaternary structure, homodimers and heterodimers. Preferentially expressed in vegetative organs.

The protein localises to the nucleus. Its function is as follows. Aux/IAA proteins are short-lived transcriptional factors that function as repressors of early auxin response genes at low auxin concentrations. Repression is thought to result from the interaction with auxin response factors (ARFs), proteins that bind to the auxin-responsive promoter element (AuxRE). Formation of heterodimers with ARF proteins may alter their ability to modulate early auxin response genes expression. This chain is Auxin-responsive protein IAA10 (IAA10), found in Arabidopsis thaliana (Mouse-ear cress).